We begin with the raw amino-acid sequence, 264 residues long: Thymidylate synthase (264 aa).

Arginine 21 is a binding site for dUMP. Histidine 51 contacts (6R)-5,10-methylene-5,6,7,8-tetrahydrofolate. 126-127 contacts dUMP; that stretch reads RR. The Nucleophile role is filled by cysteine 146. Residues 166–169, asparagine 177, and 207–209 contribute to the dUMP site; these read RSCD and HLY. A (6R)-5,10-methylene-5,6,7,8-tetrahydrofolate-binding site is contributed by aspartate 169. Alanine 263 is a binding site for (6R)-5,10-methylene-5,6,7,8-tetrahydrofolate.

This sequence belongs to the thymidylate synthase family. Bacterial-type ThyA subfamily. As to quaternary structure, homodimer.

It localises to the cytoplasm. The catalysed reaction is dUMP + (6R)-5,10-methylene-5,6,7,8-tetrahydrofolate = 7,8-dihydrofolate + dTMP. Its pathway is pyrimidine metabolism; dTTP biosynthesis. Catalyzes the reductive methylation of 2'-deoxyuridine-5'-monophosphate (dUMP) to 2'-deoxythymidine-5'-monophosphate (dTMP) while utilizing 5,10-methylenetetrahydrofolate (mTHF) as the methyl donor and reductant in the reaction, yielding dihydrofolate (DHF) as a by-product. This enzymatic reaction provides an intracellular de novo source of dTMP, an essential precursor for DNA biosynthesis. This chain is Thymidylate synthase, found in Salmonella arizonae (strain ATCC BAA-731 / CDC346-86 / RSK2980).